The sequence spans 170 residues: uncharacterized protein (170 aa).

Residues 96–116 (FSAISIGSFPIVLFLSLFFFD) form a helical membrane-spanning segment.

It is found in the membrane. This is an uncharacterized protein from Borreliella burgdorferi (strain ATCC 35210 / DSM 4680 / CIP 102532 / B31) (Borrelia burgdorferi).